The primary structure comprises 1450 residues: Protein TIC 214 (1450 aa).

The next 6 membrane-spanning stretches (helical) occupy residues 29–49, 61–81, 86–106, 132–152, 166–186, and 213–233; these read FGLYYGFLTTLPISFSHIVVI, VMAFCGLITGQLCMIGTIYYT, LFIKPHLILLLSIIYSFFYWQ, FFDSFVFQILNPILLPTPIFF, LNFFLSFFIGSLIGNFLFFNA, and IIPIVFCICLIPIAKYSHIPF.

Belongs to the TIC214 family. As to quaternary structure, part of the Tic complex.

The protein localises to the plastid. Its subcellular location is the chloroplast inner membrane. Involved in protein precursor import into chloroplasts. May be part of an intermediate translocation complex acting as a protein-conducting channel at the inner envelope. The polypeptide is Protein TIC 214 (Chaetosphaeridium globosum (Charophycean green alga)).